Here is a 31-residue protein sequence, read N- to C-terminus: Photosystem I reaction center subunit XII (31 aa).

The helical transmembrane segment at 6–25 (TQILAALVVALLPAFLAFRL) threads the bilayer.

It belongs to the PsaM family.

It localises to the cellular thylakoid membrane. This Synechocystis sp. (strain ATCC 27184 / PCC 6803 / Kazusa) protein is Photosystem I reaction center subunit XII.